Here is an 82-residue protein sequence, read N- to C-terminus: Endocuticle structural glycoprotein SgAbd-5 (82 aa).

At Q1 the chain carries Pyrrolidone carboxylic acid. Positions 18–82 constitute a Chitin-binding type R&amp;R domain; that stretch reads LGQYNFAYRT…ENGYQPRVQS (65 aa).

In terms of biological role, component of the soft endocuticle of desert locust. This chain is Endocuticle structural glycoprotein SgAbd-5, found in Schistocerca gregaria (Desert locust).